The chain runs to 500 residues: Protein adenylyltransferase Fic (500 aa).

The helical transmembrane segment at 39-59 (LSFLIFFVIGSLFSGLMFALL) threads the bilayer. TPR repeat units lie at residues 122 to 155 (ALSSLKVAVEMKLMGKDDKALRLFQHAMALSPRH) and 156 to 190 (PEILTKYGEFLEHSQQDIVTADHYYYQALTVNPSH). Residues 247–252 (SVGIEG) carry the Inhibitory (S/T)XXXE(G/N) motif motif. ATP-binding positions include glutamate 251 and 333–336 (VGGH). One can recognise a Fido domain in the interval 302 to 437 (ITLKDLLEIH…IRPFVRFIAD (136 aa)). Histidine 380 is an active-site residue. Residues 384 to 391 (DGNGRTSR), 416 to 417 (YY), and asparagine 424 contribute to the ATP site. The segment at 477 to 500 (GREGGSTVHEGSGTGDSIRIGTMW) is disordered.

This sequence belongs to the fic family. As to quaternary structure, homodimer.

The protein resides in the membrane. It carries out the reaction L-tyrosyl-[protein] + ATP = O-(5'-adenylyl)-L-tyrosyl-[protein] + diphosphate. The catalysed reaction is L-threonyl-[protein] + ATP = 3-O-(5'-adenylyl)-L-threonyl-[protein] + diphosphate. It catalyses the reaction 3-O-(5'-adenylyl)-L-threonyl-[protein] + H2O = L-threonyl-[protein] + AMP + H(+). Its activity is regulated as follows. The side chain of Glu-251 determines which of the two opposing activities (AMPylase or de-AMPylase) will take place. In response to endoplasmic reticulum stress, mediates de-AMPylase activity. Adenylyltransferase activity is inhibited by the inhibitory helix present at the N-terminus: Glu-251 binds ATP and competes with ATP-binding at Arg-391, thereby preventing adenylyltransferase activity. In unstressed cells, disengagement of Glu-251 promotes adenylyltransferase activity. Activation dissociates ATP-binding from Glu-251, allowing ordered binding of the entire ATP moiety with the alpha-phosphate in an orientation that is productive for accepting an incoming target hydroxyl side chain. Protein that can both mediate the addition of adenosine 5'-monophosphate (AMP) to specific residues of target proteins (AMPylation), and the removal of the same modification from target proteins (de-AMPylation), depending on the context. The side chain of Glu-251 determines which of the two opposing activities (AMPylase or de-AMPylase) will take place. Acts as a key regulator of the unfolded protein response (UPR) by mediating AMPylation or de-AMPylation of Hsc70-3/BiP. In unstressed cells, acts as an adenylyltransferase by mediating AMPylation of Hsc70-3/BiP at 'Thr-518', thereby inactivating it. In response to endoplasmic reticulum stress, acts as a phosphodiesterase by mediating removal of ATP (de-AMPylation) from Hsc70-3/BiP at 'Thr-518', leading to restore HSPA5/BiP activity. The polypeptide is Protein adenylyltransferase Fic (Culex quinquefasciatus (Southern house mosquito)).